The following is a 285-amino-acid chain: Probable endonuclease 4 (285 aa).

Residues histidine 69, histidine 109, glutamate 145, aspartate 179, histidine 182, histidine 216, aspartate 229, histidine 231, and glutamate 261 each coordinate Zn(2+).

Belongs to the AP endonuclease 2 family. Requires Zn(2+) as cofactor.

The catalysed reaction is Endonucleolytic cleavage to 5'-phosphooligonucleotide end-products.. Its function is as follows. Endonuclease IV plays a role in DNA repair. It cleaves phosphodiester bonds at apurinic or apyrimidinic (AP) sites, generating a 3'-hydroxyl group and a 5'-terminal sugar phosphate. The chain is Probable endonuclease 4 from Salmonella dublin (strain CT_02021853).